Consider the following 931-residue polypeptide: Mitochondrial cox1 translation regulator ppr4 (931 aa).

The N-terminal 16 residues, 1–16, are a transit peptide targeting the mitochondrion; that stretch reads MSKSFAYRHIWCFWRF. 7 PPR repeats span residues 247 to 277, 282 to 316, 429 to 461, 462 to 496, 497 to 531, 598 to 632, and 683 to 713; these read NEVLYTQYLGFLTKRGDYQIAIYMFDEMYRT, SFTACRLMIESLVRQNKFEEAISLYKKIIAKRPKI, HLLNCFLNSSTVSLDVSMVLELLRDLKKKKIKV, DERTLVICITIFSRRKDLFAMEKIHQYFSDQGIKT, SNQAYAALLDAYIEAEDTEKIELYLGKIRRLGITE, NVVHYSIAATVLGNLNQLDQLLLLEKRMESEGKAP, and PPSLFSSLIKEYTSLGDIKEAKQVLSTYLEY.

As to quaternary structure, component of the MRH5C complex, composed of mrh5, ppr4, mtf2, and sls1. Proteins mtf2 and sls1 form a subcomplex that serves as a scaffold to bring mrh5 and ppr4 together. The MRH5C complex associates with the small subunit of the mitochondrial ribosome.

It is found in the mitochondrion. Its function is as follows. RNA-binding translation activation factor that as part of the MRH5C complex specifically recruits cox1 mRNA to the mitochondrial ribosome for translation initiation. The sequence is that of Mitochondrial cox1 translation regulator ppr4 from Schizosaccharomyces pombe (strain 972 / ATCC 24843) (Fission yeast).